The primary structure comprises 232 residues: Ribonuclease 3 (232 aa).

The RNase III domain occupies 5 to 134; it reads QTVLKNHFAI…FLGALLLDKD (130 aa). Glu47 lines the Mg(2+) pocket. Asp51 is an active-site residue. Residues Asp120 and Glu123 each coordinate Mg(2+). Glu123 is an active-site residue. A DRBM domain is found at 160 to 229; sequence DYKTHLQELL…AKNAVEKGLD (70 aa).

The protein belongs to the ribonuclease III family. Homodimer. It depends on Mg(2+) as a cofactor.

It is found in the cytoplasm. It carries out the reaction Endonucleolytic cleavage to 5'-phosphomonoester.. Digests double-stranded RNA. Involved in the processing of primary rRNA transcript to yield the immediate precursors to the large and small rRNAs (23S and 16S). Processes some mRNAs, and tRNAs when they are encoded in the rRNA operon. Processes pre-crRNA and tracrRNA of type II CRISPR loci if present in the organism. The sequence is that of Ribonuclease 3 from Streptococcus pneumoniae (strain Hungary19A-6).